Here is a 170-residue protein sequence, read N- to C-terminus: Adenine phosphoribosyltransferase (170 aa).

This sequence belongs to the purine/pyrimidine phosphoribosyltransferase family. Homodimer.

Its subcellular location is the cytoplasm. It catalyses the reaction AMP + diphosphate = 5-phospho-alpha-D-ribose 1-diphosphate + adenine. It functions in the pathway purine metabolism; AMP biosynthesis via salvage pathway; AMP from adenine: step 1/1. Its function is as follows. Catalyzes a salvage reaction resulting in the formation of AMP, that is energically less costly than de novo synthesis. This Prochlorococcus marinus (strain MIT 9312) protein is Adenine phosphoribosyltransferase.